A 591-amino-acid chain; its full sequence is L-fucose isomerase (591 aa).

Active-site proton acceptor residues include glutamate 337 and aspartate 361. Mn(2+) is bound by residues glutamate 337, aspartate 361, and histidine 528.

It belongs to the L-fucose isomerase family. Homohexamer. Requires Mn(2+) as cofactor.

It is found in the cytoplasm. It carries out the reaction L-fucose = L-fuculose. The protein operates within carbohydrate degradation; L-fucose degradation; L-lactaldehyde and glycerone phosphate from L-fucose: step 1/3. Converts the aldose L-fucose into the corresponding ketose L-fuculose. The sequence is that of L-fucose isomerase from Salmonella schwarzengrund (strain CVM19633).